The sequence spans 429 residues: Glutamate-1-semialdehyde 2,1-aminomutase (429 aa).

An N6-(pyridoxal phosphate)lysine modification is found at lysine 265.

This sequence belongs to the class-III pyridoxal-phosphate-dependent aminotransferase family. HemL subfamily. In terms of assembly, homodimer. It depends on pyridoxal 5'-phosphate as a cofactor.

Its subcellular location is the cytoplasm. The enzyme catalyses (S)-4-amino-5-oxopentanoate = 5-aminolevulinate. It functions in the pathway porphyrin-containing compound metabolism; protoporphyrin-IX biosynthesis; 5-aminolevulinate from L-glutamyl-tRNA(Glu): step 2/2. In Shewanella pealeana (strain ATCC 700345 / ANG-SQ1), this protein is Glutamate-1-semialdehyde 2,1-aminomutase.